Here is a 438-residue protein sequence, read N- to C-terminus: Na(+)/H(+) antiporter NhaA (438 aa).

11 consecutive transmembrane segments (helical) span residues phenylalanine 23–leucine 43, phenylalanine 62–leucine 82, serine 104–leucine 124, glycine 133–glycine 153, valine 162–phenylalanine 182, threonine 185–leucine 205, serine 212–isoleucine 232, phenylalanine 302–valine 322, leucine 337–isoleucine 357, tryptophan 372–isoleucine 392, and isoleucine 410–leucine 430.

This sequence belongs to the NhaA Na(+)/H(+) (TC 2.A.33) antiporter family.

It is found in the cell inner membrane. The enzyme catalyses Na(+)(in) + 2 H(+)(out) = Na(+)(out) + 2 H(+)(in). In terms of biological role, na(+)/H(+) antiporter that extrudes sodium in exchange for external protons. The sequence is that of Na(+)/H(+) antiporter NhaA from Helicobacter pylori (strain G27).